The primary structure comprises 364 residues: Chorismate synthase (364 aa).

R48 and R54 together coordinate NADP(+). FMN is bound by residues R130–S132, N242–A243, G287, K302–S306, and R328.

Belongs to the chorismate synthase family. As to quaternary structure, homotetramer. It depends on FMNH2 as a cofactor.

It carries out the reaction 5-O-(1-carboxyvinyl)-3-phosphoshikimate = chorismate + phosphate. It participates in metabolic intermediate biosynthesis; chorismate biosynthesis; chorismate from D-erythrose 4-phosphate and phosphoenolpyruvate: step 7/7. Functionally, catalyzes the anti-1,4-elimination of the C-3 phosphate and the C-6 proR hydrogen from 5-enolpyruvylshikimate-3-phosphate (EPSP) to yield chorismate, which is the branch point compound that serves as the starting substrate for the three terminal pathways of aromatic amino acid biosynthesis. This reaction introduces a second double bond into the aromatic ring system. This chain is Chorismate synthase, found in Allorhizobium ampelinum (strain ATCC BAA-846 / DSM 112012 / S4) (Agrobacterium vitis (strain S4)).